Consider the following 256-residue polypeptide: MLIIDSGIGGLSILDNIKKKFPHINYIYMLDNEAFPYGKKKEKFLIERSIKIINAIKKIYPIKMVIIACNTASTISLPTLKKTFSIPIIGVLPVFKPAIKITKNKIIGLIATRSTINSLYIKKTIYKYSLENTIKIIATNELAVIAEKKVRKLSISNIKLKKIFQSWIILSIKPDTIILGCTHFSFLKKEIQQIFHKPINFIDPGDTIVNKIEKYFYQKKIKKNILLCSKYNKQIKQLVFFLKKYKFKKIQEINLN.

Substrate-binding positions include aspartate 5–serine 6 and tyrosine 37–glycine 38. Catalysis depends on cysteine 69, which acts as the Proton donor/acceptor. A substrate-binding site is contributed by asparagine 70–threonine 71. Cysteine 181 acts as the Proton donor/acceptor in catalysis. Threonine 182–histidine 183 lines the substrate pocket.

This sequence belongs to the aspartate/glutamate racemases family.

The catalysed reaction is L-glutamate = D-glutamate. The protein operates within cell wall biogenesis; peptidoglycan biosynthesis. In terms of biological role, provides the (R)-glutamate required for cell wall biosynthesis. This Buchnera aphidicola subsp. Schizaphis graminum (strain Sg) protein is Glutamate racemase.